The sequence spans 371 residues: Histidinol-phosphate aminotransferase (371 aa).

The residue at position 232 (Lys-232) is an N6-(pyridoxal phosphate)lysine.

The protein belongs to the class-II pyridoxal-phosphate-dependent aminotransferase family. Histidinol-phosphate aminotransferase subfamily. As to quaternary structure, homodimer. The cofactor is pyridoxal 5'-phosphate.

The enzyme catalyses L-histidinol phosphate + 2-oxoglutarate = 3-(imidazol-4-yl)-2-oxopropyl phosphate + L-glutamate. Its pathway is amino-acid biosynthesis; L-histidine biosynthesis; L-histidine from 5-phospho-alpha-D-ribose 1-diphosphate: step 7/9. In Methylibium petroleiphilum (strain ATCC BAA-1232 / LMG 22953 / PM1), this protein is Histidinol-phosphate aminotransferase.